The sequence spans 62 residues: Antitoxin VbhA (62 aa).

An Inhibitory (S/T)XXXE(G/N) motif motif is present at residues 20–25 (SQRLEG). Residue Glu24 coordinates ATP.

As to quaternary structure, interacts with VbhT.

Functionally, antitoxin component of type II toxin-antitoxin (TA) system VbhT-VbhA. Acts by inhibiting the adenylyltransferase activity of VbhT; competes with ATP-binding and prevents productive ATP-binding to VbhT. This is Antitoxin VbhA from Bartonella schoenbuchensis (strain DSM 13525 / NCTC 13165 / R1).